Reading from the N-terminus, the 283-residue chain is ATP synthase gamma chain (283 aa).

The protein belongs to the ATPase gamma chain family. As to quaternary structure, F-type ATPases have 2 components, CF(1) - the catalytic core - and CF(0) - the membrane proton channel. CF(1) has five subunits: alpha(3), beta(3), gamma(1), delta(1), epsilon(1). CF(0) has three main subunits: a, b and c.

The protein resides in the cell inner membrane. Functionally, produces ATP from ADP in the presence of a proton gradient across the membrane. The gamma chain is believed to be important in regulating ATPase activity and the flow of protons through the CF(0) complex. The sequence is that of ATP synthase gamma chain from Ehrlichia ruminantium (strain Gardel).